The following is a 60-amino-acid chain: UPF0434 protein ETA_21370 (60 aa).

It belongs to the UPF0434 family.

The chain is UPF0434 protein ETA_21370 from Erwinia tasmaniensis (strain DSM 17950 / CFBP 7177 / CIP 109463 / NCPPB 4357 / Et1/99).